The primary structure comprises 455 residues: Adenylyltransferase and sulfurtransferase UBA4 (455 aa).

ATP-binding positions include Gly-93, Asp-114, 121–125, Lys-138, and 182–183; these read SNLHR and DH. Positions 224 and 227 each coordinate Zn(2+). Cys-241 functions as the Glycyl thioester intermediate; for adenylyltransferase activity in the catalytic mechanism. Residues Cys-302 and Cys-305 each contribute to the Zn(2+) site. A Rhodanese domain is found at 355–453; the sequence is QSREHTLIDV…WSEDIDAAFP (99 aa). Cys-413 acts as the Cysteine persulfide intermediate; for sulfurtransferase activity in catalysis.

It in the N-terminal section; belongs to the HesA/MoeB/ThiF family. UBA4 subfamily. It depends on Zn(2+) as a cofactor.

It is found in the cytoplasm. Its subcellular location is the cytosol. Its pathway is tRNA modification; 5-methoxycarbonylmethyl-2-thiouridine-tRNA biosynthesis. Its function is as follows. Plays a central role in 2-thiolation of mcm(5)S(2)U at tRNA wobble positions of cytosolic tRNA(Lys), tRNA(Glu) and tRNA(Gln). Acts by mediating the C-terminal thiocarboxylation of sulfur carrier URM1. Its N-terminus first activates URM1 as acyl-adenylate (-COAMP), then the persulfide sulfur on the catalytic cysteine is transferred to URM1 to form thiocarboxylation (-COSH) of its C-terminus. The reaction probably involves hydrogen sulfide that is generated from the persulfide intermediate and that acts as a nucleophile towards URM1. Subsequently, a transient disulfide bond is formed. Does not use thiosulfate as sulfur donor; NFS1 probably acting as a sulfur donor for thiocarboxylation reactions. Prior mcm(5) tRNA modification by the elongator complex is required for 2-thiolation. May also be involved in protein urmylation. The chain is Adenylyltransferase and sulfurtransferase UBA4 from Lodderomyces elongisporus (strain ATCC 11503 / CBS 2605 / JCM 1781 / NBRC 1676 / NRRL YB-4239) (Yeast).